An 81-amino-acid chain; its full sequence is MSGGGVFTDILAAAGRIFEVMVEGHWETVGMLFDSLGKGTMRINRNAYGNLGGGGGSLRGSSPEVSGFAVPTKAVESKFAK.

Residue histidine 25 participates in a bacteriochlorophyll c binding.

The protein belongs to the BChl C/E-binding protein family.

Its subcellular location is the chlorosome. It localises to the chlorosome envelope. Component of the photosynthetic apparatus. The light harvesting B740 complex binds bacteriochlorophyll c. The chain is Bacteriochlorophyll c-binding protein (csmA) from Prosthecochloris aestuarii (strain DSM 271 / SK 413).